We begin with the raw amino-acid sequence, 1054 residues long: Carbamoyl phosphate synthase large chain (1054 aa).

Positions 1–402 (MPRRDDIRSI…SLLKAMASLE (402 aa)) are carboxyphosphate synthetic domain. Positions 129, 169, 175, 176, 208, 210, 215, 241, 242, 243, 285, and 299 each coordinate ATP. The ATP-grasp 1 domain maps to 133–328 (REAMERIGLR…IAKIAARLAV (196 aa)). Residues Gln-285, Glu-299, and Asn-301 each coordinate Mg(2+). Residues Gln-285, Glu-299, and Asn-301 each contribute to the Mn(2+) site. Residues 403-531 (IETRDIQARL…YYYSTYEQED (129 aa)) are oligomerization domain. Residues 532-914 (EVERGENPSV…AFAKALAAAG (383 aa)) are carbamoyl phosphate synthetic domain. The ATP-grasp 2 domain occupies 658–849 (GRLLRELGIP…LARLATRVLL (192 aa)). Arg-694, Lys-733, Glu-740, Gly-765, Val-766, His-767, Ser-768, Gln-808, and Glu-820 together coordinate ATP. Positions 808, 820, and 822 each coordinate Mg(2+). Mn(2+) is bound by residues Gln-808, Glu-820, and Asn-822. Positions 915–1054 (QRLPESGRVY…SLQDLYAART (140 aa)) constitute an MGS-like domain. The tract at residues 915 to 1054 (QRLPESGRVY…SLQDLYAART (140 aa)) is allosteric domain.

It belongs to the CarB family. As to quaternary structure, composed of two chains; the small (or glutamine) chain promotes the hydrolysis of glutamine to ammonia, which is used by the large (or ammonia) chain to synthesize carbamoyl phosphate. Tetramer of heterodimers (alpha,beta)4. The cofactor is Mg(2+). Mn(2+) serves as cofactor.

The catalysed reaction is hydrogencarbonate + L-glutamine + 2 ATP + H2O = carbamoyl phosphate + L-glutamate + 2 ADP + phosphate + 2 H(+). It carries out the reaction hydrogencarbonate + NH4(+) + 2 ATP = carbamoyl phosphate + 2 ADP + phosphate + 2 H(+). Its pathway is amino-acid biosynthesis; L-arginine biosynthesis; carbamoyl phosphate from bicarbonate: step 1/1. It functions in the pathway pyrimidine metabolism; UMP biosynthesis via de novo pathway; (S)-dihydroorotate from bicarbonate: step 1/3. Large subunit of the glutamine-dependent carbamoyl phosphate synthetase (CPSase). CPSase catalyzes the formation of carbamoyl phosphate from the ammonia moiety of glutamine, carbonate, and phosphate donated by ATP, constituting the first step of 2 biosynthetic pathways, one leading to arginine and/or urea and the other to pyrimidine nucleotides. The large subunit (synthetase) binds the substrates ammonia (free or transferred from glutamine from the small subunit), hydrogencarbonate and ATP and carries out an ATP-coupled ligase reaction, activating hydrogencarbonate by forming carboxy phosphate which reacts with ammonia to form carbamoyl phosphate. In Rubrobacter xylanophilus (strain DSM 9941 / JCM 11954 / NBRC 16129 / PRD-1), this protein is Carbamoyl phosphate synthase large chain.